We begin with the raw amino-acid sequence, 290 residues long: 4-diphosphocytidyl-2-C-methyl-D-erythritol kinase (290 aa).

Lysine 14 is a catalytic residue. ATP is bound at residue 103–113; that stretch reads PMGGGLGGGSS. The active site involves aspartate 145.

This sequence belongs to the GHMP kinase family. IspE subfamily. Homodimer.

It carries out the reaction 4-CDP-2-C-methyl-D-erythritol + ATP = 4-CDP-2-C-methyl-D-erythritol 2-phosphate + ADP + H(+). It functions in the pathway isoprenoid biosynthesis; isopentenyl diphosphate biosynthesis via DXP pathway; isopentenyl diphosphate from 1-deoxy-D-xylulose 5-phosphate: step 3/6. Functionally, catalyzes the phosphorylation of the position 2 hydroxy group of 4-diphosphocytidyl-2C-methyl-D-erythritol. The sequence is that of 4-diphosphocytidyl-2-C-methyl-D-erythritol kinase from Pectobacterium atrosepticum (strain SCRI 1043 / ATCC BAA-672) (Erwinia carotovora subsp. atroseptica).